We begin with the raw amino-acid sequence, 771 residues long: Metal transporter CNNM4 (771 aa).

The Extracellular segment spans residues 1 to 175 (MAPGGGGGRR…LLFMVEEHGR (175 aa)). The N-linked (GlcNAc...) asparagine glycan is linked to asparagine 119. The CNNM transmembrane domain maps to 175–355 (RFLPLWLHIL…EPYNDLVKEE (181 aa)). The helical transmembrane segment at 176 to 196 (FLPLWLHILLVMVLLVLSGIF) threads the bilayer. Residues 197-237 (SGLNLGLMALDPMELRIVQNCGTEKERKYARKIEPIRRKGN) lie on the Cytoplasmic side of the membrane. Positions 238-258 (YLLCSLLLGNVLVNTSLTILL) form an intramembrane region, helical. The Cytoplasmic segment spans residues 259–261 (DNL). The helical transmembrane segment at 262-282 (IGSGIMAVASSTIGIVIFGEI) threads the bilayer. The Extracellular segment spans residues 283-290 (LPQALCSR). The helical transmembrane segment at 291-313 (HGLAVGANTIVLTKVFMLLTFPL) threads the bilayer. The Cytoplasmic portion of the chain corresponds to 314 to 771 (SFPISKLLDF…LHRASEEETI (458 aa)). 2 consecutive CBS domains span residues 374–435 (MTQL…CTPL) and 442–508 (YNHP…ILDE). Residues serine 657, serine 661, and serine 766 each carry the phosphoserine modification.

The protein belongs to the ACDP family. In terms of assembly, interacts with COX11. Cornea, retina, teeth (at protein level). In the retina it is predominantly localized to the outer plexiform layer, inner plexiform layer and ganglion cell layer. In the tooth strongest expression is observed in the cell body of the ameloblasts. Expressed at high levels in the gastrointestinal tract and testis.

The protein localises to the cell membrane. Its function is as follows. Probable metal transporter. The interaction with the metal ion chaperone COX11 suggests that it may play a role in sensory neuron functions. May play a role in biomineralization and retinal function. This is Metal transporter CNNM4 (Cnnm4) from Mus musculus (Mouse).